A 158-amino-acid polypeptide reads, in one-letter code: SsrA-binding protein (158 aa).

Belongs to the SmpB family.

It is found in the cytoplasm. In terms of biological role, required for rescue of stalled ribosomes mediated by trans-translation. Binds to transfer-messenger RNA (tmRNA), required for stable association of tmRNA with ribosomes. tmRNA and SmpB together mimic tRNA shape, replacing the anticodon stem-loop with SmpB. tmRNA is encoded by the ssrA gene; the 2 termini fold to resemble tRNA(Ala) and it encodes a 'tag peptide', a short internal open reading frame. During trans-translation Ala-aminoacylated tmRNA acts like a tRNA, entering the A-site of stalled ribosomes, displacing the stalled mRNA. The ribosome then switches to translate the ORF on the tmRNA; the nascent peptide is terminated with the 'tag peptide' encoded by the tmRNA and targeted for degradation. The ribosome is freed to recommence translation, which seems to be the essential function of trans-translation. The polypeptide is SsrA-binding protein (Bartonella quintana (strain Toulouse) (Rochalimaea quintana)).